Reading from the N-terminus, the 400-residue chain is Phosphoglycerate kinase (400 aa).

Residues 23–25 (DLN), Arg38, 61–64 (HFGR), Arg120, and Arg153 contribute to the substrate site. ATP is bound by residues Lys203, Glu325, and 355–358 (GGDT).

The protein belongs to the phosphoglycerate kinase family. In terms of assembly, monomer.

It localises to the cytoplasm. The enzyme catalyses (2R)-3-phosphoglycerate + ATP = (2R)-3-phospho-glyceroyl phosphate + ADP. Its pathway is carbohydrate degradation; glycolysis; pyruvate from D-glyceraldehyde 3-phosphate: step 2/5. The chain is Phosphoglycerate kinase from Methylorubrum extorquens (strain PA1) (Methylobacterium extorquens).